The following is a 127-amino-acid chain: Glycine cleavage system H protein (127 aa).

A Lipoyl-binding domain is found at 24-105 (TALAGITDFA…YGEGWLVKIK (82 aa)). K65 is modified (N6-lipoyllysine).

The protein belongs to the GcvH family. The glycine cleavage system is composed of four proteins: P, T, L and H. It depends on (R)-lipoate as a cofactor.

Its function is as follows. The glycine cleavage system catalyzes the degradation of glycine. The H protein shuttles the methylamine group of glycine from the P protein to the T protein. The chain is Glycine cleavage system H protein from Chlorobium phaeobacteroides (strain DSM 266 / SMG 266 / 2430).